The following is a 1029-amino-acid chain: Chitin synthase 3 (1029 aa).

The disordered stretch occupies residues 1-29; it reads MAYYSRPASAGAARAQDDQDPYPYYPDPD. Asn-37 carries N-linked (GlcNAc...) asparagine glycosylation. Positions 46 to 71 are enriched in low complexity; that stretch reads ASGAASSASHTSPFSDAHAASASPAS. Disordered regions lie at residues 46-105 and 168-209; these read ASGA…SRMP and LAHR…AGTS. Over residues 76–91 the composition is skewed to polar residues; it reads SHQQVSAHAPQQQHMS. Residues 191–202 are compositionally biased toward basic and acidic residues; sequence AHDEKYAYDRPD. N-linked (GlcNAc...) asparagine glycosylation is found at Asn-401, Asn-514, Asn-527, and Asn-689. 7 helical membrane-spanning segments follow: residues 723–743, 760–780, 796–816, 830–850, 860–880, 963–983, and 998–1018; these read FYSF…YIFF, IGVF…SSFI, AAVV…VLCL, AQMV…SLLA, FLQY…YAFC, VVLA…NGDA, and VYMV…FIGS.

It belongs to the chitin synthase family. Class I subfamily.

Its subcellular location is the cell membrane. The protein localises to the cytoplasmic vesicle membrane. It catalyses the reaction [(1-&gt;4)-N-acetyl-beta-D-glucosaminyl](n) + UDP-N-acetyl-alpha-D-glucosamine = [(1-&gt;4)-N-acetyl-beta-D-glucosaminyl](n+1) + UDP + H(+). In terms of biological role, polymerizes chitin, a structural polymer of the cell wall and septum, by transferring the sugar moiety of UDP-GlcNAc to the non-reducing end of the growing chitin polymer. This Mycosarcoma maydis (Corn smut fungus) protein is Chitin synthase 3.